Here is a 305-residue protein sequence, read N- to C-terminus: UDP-3-O-acyl-N-acetylglucosamine deacetylase (305 aa).

Residues H78, H237, and D241 each contribute to the Zn(2+) site. Residue H264 is the Proton donor of the active site.

The protein belongs to the LpxC family. Zn(2+) serves as cofactor.

The catalysed reaction is a UDP-3-O-[(3R)-3-hydroxyacyl]-N-acetyl-alpha-D-glucosamine + H2O = a UDP-3-O-[(3R)-3-hydroxyacyl]-alpha-D-glucosamine + acetate. The protein operates within glycolipid biosynthesis; lipid IV(A) biosynthesis; lipid IV(A) from (3R)-3-hydroxytetradecanoyl-[acyl-carrier-protein] and UDP-N-acetyl-alpha-D-glucosamine: step 2/6. In terms of biological role, catalyzes the hydrolysis of UDP-3-O-myristoyl-N-acetylglucosamine to form UDP-3-O-myristoylglucosamine and acetate, the committed step in lipid A biosynthesis. This Paraburkholderia xenovorans (strain LB400) protein is UDP-3-O-acyl-N-acetylglucosamine deacetylase.